We begin with the raw amino-acid sequence, 207 residues long: dTTP/UTP pyrophosphatase (207 aa).

The active-site Proton acceptor is the Asp79.

Belongs to the Maf family. YhdE subfamily. A divalent metal cation is required as a cofactor.

Its subcellular location is the cytoplasm. The enzyme catalyses dTTP + H2O = dTMP + diphosphate + H(+). It catalyses the reaction UTP + H2O = UMP + diphosphate + H(+). Its function is as follows. Nucleoside triphosphate pyrophosphatase that hydrolyzes dTTP and UTP. May have a dual role in cell division arrest and in preventing the incorporation of modified nucleotides into cellular nucleic acids. The polypeptide is dTTP/UTP pyrophosphatase (Rhodopseudomonas palustris (strain ATCC BAA-98 / CGA009)).